Here is a 412-residue protein sequence, read N- to C-terminus: Kelch repeat-containing protein At1g19470 (412 aa).

The segment at 1 to 55 (MVNISEIPDDSNDGCDPNKKPEEQVLRRSRRIATRNENQNKKPKEEEEEDNRSVS) is disordered. A compositionally biased stretch (basic and acidic residues) spans 16–26 (DPNKKPEEQVL). Kelch repeat units lie at residues 156–202 (EMYV…VVDG), 203–250 (KIYV…SAHA), 255–291 (KLYMLGSKFCLVYEPKRNGEWDASVGATPLKDLWDKT), and 292–345 (CCVV…EMAN).

This is Kelch repeat-containing protein At1g19470 from Arabidopsis thaliana (Mouse-ear cress).